Consider the following 353-residue polypeptide: Protein pelota homolog (353 aa).

It belongs to the eukaryotic release factor 1 family. Pelota subfamily. Monomer. A divalent metal cation serves as cofactor.

It is found in the cytoplasm. Functionally, may function in recognizing stalled ribosomes, interact with stem-loop structures in stalled mRNA molecules, and effect endonucleolytic cleavage of the mRNA. May play a role in the release non-functional ribosomes and degradation of damaged mRNAs. Has endoribonuclease activity. The polypeptide is Protein pelota homolog (Methanothermobacter thermautotrophicus (strain ATCC 29096 / DSM 1053 / JCM 10044 / NBRC 100330 / Delta H) (Methanobacterium thermoautotrophicum)).